Consider the following 164-residue polypeptide: Small ribosomal subunit protein uS5 (164 aa).

The S5 DRBM domain occupies leucine 10–valine 73.

The protein belongs to the universal ribosomal protein uS5 family. Part of the 30S ribosomal subunit. Contacts proteins S4 and S8.

Its function is as follows. With S4 and S12 plays an important role in translational accuracy. Located at the back of the 30S subunit body where it stabilizes the conformation of the head with respect to the body. This Streptococcus pyogenes serotype M1 protein is Small ribosomal subunit protein uS5.